Consider the following 507-residue polypeptide: Maturase K (507 aa).

It belongs to the intron maturase 2 family. MatK subfamily.

It is found in the plastid. The protein localises to the chloroplast. Its function is as follows. Usually encoded in the trnK tRNA gene intron. Probably assists in splicing its own and other chloroplast group II introns. In Euryale ferox (Gorgon plant), this protein is Maturase K.